Reading from the N-terminus, the 195-residue chain is Dephospho-CoA kinase (195 aa).

Residues 3–195 (KIGLTGGIGS…ANMKNVIAEI (193 aa)) enclose the DPCK domain. Residue 11–16 (GSGKST) coordinates ATP.

The protein belongs to the CoaE family.

It localises to the cytoplasm. It catalyses the reaction 3'-dephospho-CoA + ATP = ADP + CoA + H(+). It participates in cofactor biosynthesis; coenzyme A biosynthesis; CoA from (R)-pantothenate: step 5/5. Catalyzes the phosphorylation of the 3'-hydroxyl group of dephosphocoenzyme A to form coenzyme A. The chain is Dephospho-CoA kinase from Corynebacterium glutamicum (Brevibacterium saccharolyticum).